A 400-amino-acid polypeptide reads, in one-letter code: DNA primase small subunit PriS (400 aa).

Catalysis depends on residues Asp-98, Asp-100, and Asp-306.

It belongs to the eukaryotic-type primase small subunit family. As to quaternary structure, heterodimer of a small subunit (PriS) and a large subunit (PriL). The cofactor is Mg(2+). It depends on Mn(2+) as a cofactor.

Its function is as follows. Catalytic subunit of DNA primase, an RNA polymerase that catalyzes the synthesis of short RNA molecules used as primers for DNA polymerase during DNA replication. The small subunit contains the primase catalytic core and has DNA synthesis activity on its own. Binding to the large subunit stabilizes and modulates the activity, increasing the rate of DNA synthesis while decreasing the length of the DNA fragments, and conferring RNA synthesis capability. The DNA polymerase activity may enable DNA primase to also catalyze primer extension after primer synthesis. May also play a role in DNA repair. The chain is DNA primase small subunit PriS from Methanocella arvoryzae (strain DSM 22066 / NBRC 105507 / MRE50).